Consider the following 556-residue polypeptide: Glutamine--tRNA ligase (556 aa).

A 'HIGH' region motif is present at residues 34–44; that stretch reads PEPNGYLHIGH. ATP is bound by residues 35–37 and 41–47; these read EPN and HIGHAKS. L-glutamine contacts are provided by Asp-67 and Tyr-212. Residues Thr-231, 263–264, and 271–273 each bind ATP; these read RL and MSK. The 'KMSKS' region motif lies at 270–274; it reads VMSKR.

The protein belongs to the class-I aminoacyl-tRNA synthetase family. As to quaternary structure, monomer.

The protein resides in the cytoplasm. The catalysed reaction is tRNA(Gln) + L-glutamine + ATP = L-glutaminyl-tRNA(Gln) + AMP + diphosphate. This is Glutamine--tRNA ligase from Nitrosomonas europaea (strain ATCC 19718 / CIP 103999 / KCTC 2705 / NBRC 14298).